The sequence spans 609 residues: UvrABC system protein C (609 aa).

Residues 16–94 (HLPGVYRHLD…IKSLRPRYNI (79 aa)) enclose the GIY-YIG domain. The UVR domain maps to 203-238 (REVMDEIEARMLQASTELRFEEAAVLRDQMGSLSKV).

Belongs to the UvrC family. Interacts with UvrB in an incision complex.

The protein resides in the cytoplasm. Its function is as follows. The UvrABC repair system catalyzes the recognition and processing of DNA lesions. UvrC both incises the 5' and 3' sides of the lesion. The N-terminal half is responsible for the 3' incision and the C-terminal half is responsible for the 5' incision. This is UvrABC system protein C from Bordetella bronchiseptica (strain ATCC BAA-588 / NCTC 13252 / RB50) (Alcaligenes bronchisepticus).